A 183-amino-acid chain; its full sequence is NAD(P)H-quinone oxidoreductase subunit I, chloroplastic (183 aa).

2 4Fe-4S ferredoxin-type domains span residues 55 to 84 (GRIH…VDWK) and 95 to 124 (KSYS…MTEE). [4Fe-4S] cluster contacts are provided by cysteine 64, cysteine 67, cysteine 70, cysteine 74, cysteine 104, cysteine 107, cysteine 110, and cysteine 114.

The protein belongs to the complex I 23 kDa subunit family. In terms of assembly, NDH is composed of at least 16 different subunits, 5 of which are encoded in the nucleus. The cofactor is [4Fe-4S] cluster.

The protein resides in the plastid. The protein localises to the chloroplast thylakoid membrane. The catalysed reaction is a plastoquinone + NADH + (n+1) H(+)(in) = a plastoquinol + NAD(+) + n H(+)(out). The enzyme catalyses a plastoquinone + NADPH + (n+1) H(+)(in) = a plastoquinol + NADP(+) + n H(+)(out). Functionally, NDH shuttles electrons from NAD(P)H:plastoquinone, via FMN and iron-sulfur (Fe-S) centers, to quinones in the photosynthetic chain and possibly in a chloroplast respiratory chain. The immediate electron acceptor for the enzyme in this species is believed to be plastoquinone. Couples the redox reaction to proton translocation, and thus conserves the redox energy in a proton gradient. The chain is NAD(P)H-quinone oxidoreductase subunit I, chloroplastic from Anthoceros angustus (Hornwort).